Here is a 169-residue protein sequence, read N- to C-terminus: Ureidoglycolate lyase (169 aa).

This sequence belongs to the ureidoglycolate lyase family. In terms of assembly, homodimer. Ni(2+) is required as a cofactor.

It catalyses the reaction (S)-ureidoglycolate = urea + glyoxylate. It participates in nitrogen metabolism; (S)-allantoin degradation. Catalyzes the catabolism of the allantoin degradation intermediate (S)-ureidoglycolate, generating urea and glyoxylate. Involved in the utilization of allantoin as nitrogen source. The protein is Ureidoglycolate lyase of Brucella melitensis biotype 2 (strain ATCC 23457).